A 249-amino-acid polypeptide reads, in one-letter code: 5'-nucleotidase SurE (249 aa).

Positions 8, 9, 39, and 91 each coordinate a divalent metal cation.

The protein belongs to the SurE nucleotidase family. Requires a divalent metal cation as cofactor.

The protein localises to the cytoplasm. It catalyses the reaction a ribonucleoside 5'-phosphate + H2O = a ribonucleoside + phosphate. In terms of biological role, nucleotidase that shows phosphatase activity on nucleoside 5'-monophosphates. The protein is 5'-nucleotidase SurE of Stutzerimonas stutzeri (strain A1501) (Pseudomonas stutzeri).